The chain runs to 178 residues: Large ribosomal subunit protein uL6 (178 aa).

Residues 155 to 169 (PYKGKGIKYDNEQIR) are compositionally biased toward basic and acidic residues. The disordered stretch occupies residues 155-178 (PYKGKGIKYDNEQIRRKAGKSGGK).

The protein belongs to the universal ribosomal protein uL6 family. As to quaternary structure, part of the 50S ribosomal subunit.

In terms of biological role, this protein binds to the 23S rRNA, and is important in its secondary structure. It is located near the subunit interface in the base of the L7/L12 stalk, and near the tRNA binding site of the peptidyltransferase center. This chain is Large ribosomal subunit protein uL6, found in Nitratidesulfovibrio vulgaris (strain DSM 19637 / Miyazaki F) (Desulfovibrio vulgaris).